Consider the following 1120-residue polypeptide: Cluster 41 polyketide synthase (1120 aa).

A Ketosynthase family 3 (KS3) domain is found at 7–430 (PHDVAVVGMG…GTVSHAIIEK (424 aa)). Catalysis depends on for beta-ketoacyl synthase activity residues Cys-178, His-313, and His-353. The tract at residues 539–796 (VWVFSGHGAQ…TSAISAAAED (258 aa)) is malonyl-CoA:ACP transacylase (MAT) domain. Ser-625 (for acyl/malonyl transferase activity) is an active-site residue. Positions 804-943 (IKKILSMESR…IAMQWTSWRE (140 aa)) are ketoreductase (KR) domain. The Carrier domain maps to 1042–1116 (DSLSRQVREC…HIVKWLMEKT (75 aa)). Ser-1076 carries the O-(pantetheine 4'-phosphoryl)serine modification.

In terms of biological role, polyketide synthase; part of the gene cluster 41 that mediates the biosynthesis of an extracellular and diffusible metabolite that is able to stimulate colony sclerotial production. This Aspergillus flavus (strain ATCC 200026 / FGSC A1120 / IAM 13836 / NRRL 3357 / JCM 12722 / SRRC 167) protein is Cluster 41 polyketide synthase.